Here is a 137-residue protein sequence, read N- to C-terminus: MRTLWIVAVCLIGVEGNLFQFGKMIKYKTGKSALLSYSAYGCYCGWGGQGKPQDPTDRCCFVHDCCYGRVNGCNPKMDTYSYSFLNGDIVCGDDDPCLRAICECDRAAAICFGENVNTYDKKYKYYSSSHCTETEQC.

Positions 1–16 (MRTLWIVAVCLIGVEG) are cleaved as a signal peptide. Disulfide bonds link Cys-42/Cys-131, Cys-44/Cys-60, Cys-59/Cys-111, Cys-65/Cys-137, Cys-66/Cys-104, Cys-73/Cys-97, and Cys-91/Cys-102. Residues Tyr-43, Gly-45, and Gly-47 each coordinate Ca(2+). Residue His-63 is part of the active site. Position 64 (Asp-64) interacts with Ca(2+). Residue Asp-105 is part of the active site.

Requires Ca(2+) as cofactor. As to expression, expressed by the venom gland.

The protein localises to the secreted. It carries out the reaction a 1,2-diacyl-sn-glycero-3-phosphocholine + H2O = a 1-acyl-sn-glycero-3-phosphocholine + a fatty acid + H(+). The protein is Acidic phospholipase A2 Vur-PL3 of Vipera renardi (Steppe viper).